A 468-amino-acid chain; its full sequence is Neuraminidase (468 aa).

At 1–15 the chain is on the intravirion side; sequence MNPNQKIITIGSASL. The tract at residues 11 to 33 is involved in apical transport and lipid raft association; sequence GSASLGLVIFNILLHVASITLGI. A helical membrane pass occupies residues 16–36; that stretch reads GLVIFNILLHVASITLGIISV. The segment at 36-80 is hypervariable stalk region; it reads VTKDNKVHICNTTEVYNETVRVETVVIPVNNTIYLNHEPEFLNNT. The Virion surface portion of the chain corresponds to 37-468; the sequence is TKDNKVHICN…AILPFDIDKM (432 aa). Residues N46, N52, N65, and N78 are each glycosylated (N-linked (GlcNAc...) asparagine; by host). Residues 83–468 form a head of neuraminidase region; the sequence is LCDVSGFAIV…AILPFDIDKM (386 aa). 8 cysteine pairs are disulfide-bonded: C84-C414, C116-C121, C176-C223, C225-C230, C271-C284, C273-C282, C310-C329, and C418-C444. A substrate-binding site is contributed by R110. The N-linked (GlcNAc...) asparagine; by host glycan is linked to N138. D143 functions as the Proton donor/acceptor in the catalytic mechanism. R144 contributes to the substrate binding site. 269-270 lines the substrate pocket; it reads EE. R285 serves as a coordination point for substrate. D286, G290, and D316 together coordinate Ca(2+). R365 serves as a coordination point for substrate. Residue N395 is glycosylated (N-linked (GlcNAc...) asparagine; by host). Residue Y399 is the Nucleophile of the active site.

Belongs to the glycosyl hydrolase 34 family. In terms of assembly, homotetramer. The cofactor is Ca(2+). Post-translationally, N-glycosylated.

It is found in the virion membrane. It localises to the host apical cell membrane. It carries out the reaction Hydrolysis of alpha-(2-&gt;3)-, alpha-(2-&gt;6)-, alpha-(2-&gt;8)- glycosidic linkages of terminal sialic acid residues in oligosaccharides, glycoproteins, glycolipids, colominic acid and synthetic substrates.. Its activity is regulated as follows. Inhibited by the neuraminidase inhibitors zanamivir (Relenza) and oseltamivir (Tamiflu). These drugs interfere with the release of progeny virus from infected cells and are effective against all influenza strains. Resistance to neuraminidase inhibitors is quite rare. Its function is as follows. Catalyzes the removal of terminal sialic acid residues from viral and cellular glycoconjugates. Cleaves off the terminal sialic acids on the glycosylated HA during virus budding to facilitate virus release. Additionally helps virus spread through the circulation by further removing sialic acids from the cell surface. These cleavages prevent self-aggregation and ensure the efficient spread of the progeny virus from cell to cell. Otherwise, infection would be limited to one round of replication. Described as a receptor-destroying enzyme because it cleaves a terminal sialic acid from the cellular receptors. May facilitate viral invasion of the upper airways by cleaving the sialic acid moieties on the mucin of the airway epithelial cells. Likely to plays a role in the budding process through its association with lipid rafts during intracellular transport. May additionally display a raft-association independent effect on budding. Plays a role in the determination of host range restriction on replication and virulence. Sialidase activity in late endosome/lysosome traffic seems to enhance virus replication. In Aves, this protein is Neuraminidase.